The sequence spans 523 residues: Glycerate kinase (523 aa).

Serine 60 is modified (phosphoserine). Lysine 200 is modified (N6-acetyllysine).

Belongs to the glycerate kinase type-2 family.

The protein localises to the cytoplasm. It carries out the reaction (R)-glycerate + ATP = (2R)-3-phosphoglycerate + ADP + H(+). The chain is Glycerate kinase (GLYCTK) from Bos taurus (Bovine).